The primary structure comprises 307 residues: Ubiquinol oxidase subunit 2 (307 aa).

The first 23 residues, 1–23 (MKNKLLARVARLGGLSSALLLAG), serve as a signal peptide directing secretion. Cysteine 24 carries N-palmitoyl cysteine lipidation. Cysteine 24 carries the S-diacylglycerol cysteine lipid modification. The next 2 membrane-spanning stretches (helical) occupy residues 46–66 (STVA…LFAW) and 87–107 (IEVT…VITY).

This sequence belongs to the cytochrome c oxidase subunit 2 family. In terms of assembly, heterotetramer of the subunits 1, 2, 3 and 4.

Its subcellular location is the cell membrane. This is Ubiquinol oxidase subunit 2 (cyaB) from Acetobacter aceti.